The primary structure comprises 259 residues: Phosphatidylglycerol--prolipoprotein diacylglyceryl transferase (259 aa).

4 helical membrane-spanning segments follow: residues 12-32 (LSLH…VYLA), 46-66 (IIDF…IYYV), 83-103 (IWNG…VLFV), and 109-129 (VLNP…AQAI). Residue arginine 131 coordinates a 1,2-diacyl-sn-glycero-3-phospho-(1'-sn-glycerol). The next 3 membrane-spanning stretches (helical) occupy residues 167 to 187 (VPTF…IMVW), 194 to 214 (LVDG…RLVI), and 226 to 246 (GIRV…VFIF).

Belongs to the Lgt family.

It localises to the cell membrane. The catalysed reaction is L-cysteinyl-[prolipoprotein] + a 1,2-diacyl-sn-glycero-3-phospho-(1'-sn-glycerol) = an S-1,2-diacyl-sn-glyceryl-L-cysteinyl-[prolipoprotein] + sn-glycerol 1-phosphate + H(+). It participates in protein modification; lipoprotein biosynthesis (diacylglyceryl transfer). In terms of biological role, catalyzes the transfer of the diacylglyceryl group from phosphatidylglycerol to the sulfhydryl group of the N-terminal cysteine of a prolipoprotein, the first step in the formation of mature lipoproteins. The polypeptide is Phosphatidylglycerol--prolipoprotein diacylglyceryl transferase (Streptococcus equi subsp. equi (strain 4047)).